The sequence spans 255 residues: 5'-nucleotidase SurE (255 aa).

Asp8, Asp9, Ser39, and Asn91 together coordinate a divalent metal cation.

It belongs to the SurE nucleotidase family. Requires a divalent metal cation as cofactor.

Its subcellular location is the cytoplasm. The catalysed reaction is a ribonucleoside 5'-phosphate + H2O = a ribonucleoside + phosphate. Functionally, nucleotidase that shows phosphatase activity on nucleoside 5'-monophosphates. The sequence is that of 5'-nucleotidase SurE from Acinetobacter baylyi (strain ATCC 33305 / BD413 / ADP1).